A 66-amino-acid chain; its full sequence is Large ribosomal subunit protein bL35 (66 aa).

Over residues 1–26 the composition is skewed to basic residues; sequence MPKMKTHRGSAKRFKKTGSGKLKRSH. Residues 1–48 are disordered; it reads MPKMKTHRGSAKRFKKTGSGKLKRSHAYTSHLFANKSQKQKRKLRKSA.

Belongs to the bacterial ribosomal protein bL35 family. In terms of assembly, part of the 50S ribosomal subunit.

The polypeptide is Large ribosomal subunit protein bL35 (Bacillus subtilis (strain 168)).